The primary structure comprises 311 residues: Malate dehydrogenase (311 aa).

NAD(+) is bound by residues 7–13 (GAAGGIG) and Asp34. Positions 81 and 87 each coordinate substrate. NAD(+) contacts are provided by residues Asn94 and 117-119 (ITN). 2 residues coordinate substrate: Asn119 and Arg153. His177 functions as the Proton acceptor in the catalytic mechanism. Met227 serves as a coordination point for NAD(+).

This sequence belongs to the LDH/MDH superfamily. MDH type 1 family. In terms of assembly, homodimer.

It carries out the reaction (S)-malate + NAD(+) = oxaloacetate + NADH + H(+). Catalyzes the reversible oxidation of malate to oxaloacetate. The sequence is that of Malate dehydrogenase from Shewanella piezotolerans (strain WP3 / JCM 13877).